Here is a 310-residue protein sequence, read N- to C-terminus: tRNA dimethylallyltransferase (310 aa).

14 to 21 (GPTASGKS) contacts ATP. Substrate is bound at residue 16-21 (TASGKS). Interaction with substrate tRNA regions lie at residues 39-42 (DSMQ) and 163-167 (QRIVR).

This sequence belongs to the IPP transferase family. As to quaternary structure, monomer. Mg(2+) serves as cofactor.

The enzyme catalyses adenosine(37) in tRNA + dimethylallyl diphosphate = N(6)-dimethylallyladenosine(37) in tRNA + diphosphate. Catalyzes the transfer of a dimethylallyl group onto the adenine at position 37 in tRNAs that read codons beginning with uridine, leading to the formation of N6-(dimethylallyl)adenosine (i(6)A). The polypeptide is tRNA dimethylallyltransferase (Brucella abortus (strain S19)).